The sequence spans 102 residues: MAKGQSLQDPFLNALRRERVPVSIYLVNGIKLQGQIESFDQFVILLKNTVSQMVYKHAISTVVPSRPVSHHSNNAGGGASNNYHHGSNAQGSTAQQDSEETE.

Residues 9-68 (DPFLNALRRERVPVSIYLVNGIKLQGQIESFDQFVILLKNTVSQMVYKHAISTVVPSRPV) enclose the Sm domain. The disordered stretch occupies residues 63 to 102 (VPSRPVSHHSNNAGGGASNNYHHGSNAQGSTAQQDSEETE). Positions 70–88 (HHSNNAGGGASNNYHHGSN) are enriched in low complexity.

Belongs to the Hfq family. In terms of assembly, homohexamer.

RNA chaperone that binds small regulatory RNA (sRNAs) and mRNAs to facilitate mRNA translational regulation in response to envelope stress, environmental stress and changes in metabolite concentrations. Also binds with high specificity to tRNAs. In Salmonella agona (strain SL483), this protein is RNA-binding protein Hfq.